The following is a 415-amino-acid chain: Serine/threonine transporter SstT (415 aa).

8 helical membrane passes run 15–35 (GSLVKQILVGLIAGILLAWLA), 45–65 (LGTLFVGALKAVAPVLVWILV), 85–105 (ILYILGTFFAALVAVAGSFIF), 142–162 (ALLNGNYIGILAWAIGLGIAL), 193–213 (VGIFGLVSATIAETGFNALLG), 217–237 (LLVVLLSCMLVMALVVNPLIV), 301–321 (GAAVTIPVLTLAAVNTLGIPV), and 331–351 (VVSAICACGASGVAGGSLLLI).

The protein belongs to the dicarboxylate/amino acid:cation symporter (DAACS) (TC 2.A.23) family.

The protein resides in the cell inner membrane. The enzyme catalyses L-serine(in) + Na(+)(in) = L-serine(out) + Na(+)(out). It catalyses the reaction L-threonine(in) + Na(+)(in) = L-threonine(out) + Na(+)(out). In terms of biological role, involved in the import of serine and threonine into the cell, with the concomitant import of sodium (symport system). In Photorhabdus laumondii subsp. laumondii (strain DSM 15139 / CIP 105565 / TT01) (Photorhabdus luminescens subsp. laumondii), this protein is Serine/threonine transporter SstT.